An 850-amino-acid chain; its full sequence is Protein translocase subunit SecA (850 aa).

ATP contacts are provided by residues glutamine 87, 105 to 109, and aspartate 494; that span reads GEGKT. Residues cysteine 834, cysteine 836, cysteine 845, and cysteine 846 each coordinate Zn(2+).

The protein belongs to the SecA family. In terms of assembly, monomer and homodimer. Part of the essential Sec protein translocation apparatus which comprises SecA, SecYEG and auxiliary proteins SecDF-YajC and YidC. It depends on Zn(2+) as a cofactor.

The protein localises to the cell inner membrane. Its subcellular location is the cytoplasm. The catalysed reaction is ATP + H2O + cellular proteinSide 1 = ADP + phosphate + cellular proteinSide 2.. Part of the Sec protein translocase complex. Interacts with the SecYEG preprotein conducting channel. Has a central role in coupling the hydrolysis of ATP to the transfer of proteins into and across the cell membrane, serving as an ATP-driven molecular motor driving the stepwise translocation of polypeptide chains across the membrane. In Desulfotalea psychrophila (strain LSv54 / DSM 12343), this protein is Protein translocase subunit SecA.